A 69-amino-acid chain; its full sequence is Cytochrome c oxidase subunit 8A, mitochondrial (69 aa).

The transit peptide at 1-25 (MSVLTSLLLRGLTGSARRLPVPRAK) directs the protein to the mitochondrion. The Mitochondrial matrix portion of the chain corresponds to 26 to 36 (VHSMPPEEELG). Residues 37–60 (IMEKAIGLTFCFVSLFLPAGWILS) form a helical membrane-spanning segment. At 61–69 (HLEDYKRPE) the chain is on the mitochondrial intermembrane side.

The protein belongs to the cytochrome c oxidase VIII family. Component of the cytochrome c oxidase (complex IV, CIV), a multisubunit enzyme composed of 14 subunits. The complex is composed of a catalytic core of 3 subunits MT-CO1, MT-CO2 and MT-CO3, encoded in the mitochondrial DNA, and 11 supernumerary subunits COX4I, COX5A, COX5B, COX6A, COX6B, COX6C, COX7A, COX7B, COX7C, COX8 and NDUFA4, which are encoded in the nuclear genome. The complex exists as a monomer or a dimer and forms supercomplexes (SCs) in the inner mitochondrial membrane with NADH-ubiquinone oxidoreductase (complex I, CI) and ubiquinol-cytochrome c oxidoreductase (cytochrome b-c1 complex, complex III, CIII), resulting in different assemblies (supercomplex SCI(1)III(2)IV(1) and megacomplex MCI(2)III(2)IV(2)). In terms of processing, in response to mitochondrial stress, the precursor protein is ubiquitinated by the SIFI complex in the cytoplasm before mitochondrial import, leading to its degradation. Within the SIFI complex, UBR4 initiates ubiquitin chain that are further elongated or branched by KCMF1.

It is found in the mitochondrion inner membrane. The protein operates within energy metabolism; oxidative phosphorylation. In terms of biological role, component of the cytochrome c oxidase, the last enzyme in the mitochondrial electron transport chain which drives oxidative phosphorylation. The respiratory chain contains 3 multisubunit complexes succinate dehydrogenase (complex II, CII), ubiquinol-cytochrome c oxidoreductase (cytochrome b-c1 complex, complex III, CIII) and cytochrome c oxidase (complex IV, CIV), that cooperate to transfer electrons derived from NADH and succinate to molecular oxygen, creating an electrochemical gradient over the inner membrane that drives transmembrane transport and the ATP synthase. Cytochrome c oxidase is the component of the respiratory chain that catalyzes the reduction of oxygen to water. Electrons originating from reduced cytochrome c in the intermembrane space (IMS) are transferred via the dinuclear copper A center (CU(A)) of subunit 2 and heme A of subunit 1 to the active site in subunit 1, a binuclear center (BNC) formed by heme A3 and copper B (CU(B)). The BNC reduces molecular oxygen to 2 water molecules using 4 electrons from cytochrome c in the IMS and 4 protons from the mitochondrial matrix. The sequence is that of Cytochrome c oxidase subunit 8A, mitochondrial (COX8A) from Macaca fascicularis (Crab-eating macaque).